The primary structure comprises 176 residues: Cytochrome b (176 aa).

Helical transmembrane passes span 33–53, 77–98, and 113–133; these read FGSL…FLAM, WLLR…YLHV, and WNVG…GYVL. Heme b is bound by residues His-83 and His-97.

Belongs to the cytochrome b family. In terms of assembly, the cytochrome bc1 complex contains 11 subunits: 3 respiratory subunits (MT-CYB, CYC1 and UQCRFS1), 2 core proteins (UQCRC1 and UQCRC2) and 6 low-molecular weight proteins (UQCRH/QCR6, UQCRB/QCR7, UQCRQ/QCR8, UQCR10/QCR9, UQCR11/QCR10 and a cleavage product of UQCRFS1). This cytochrome bc1 complex then forms a dimer. Requires heme b as cofactor.

It is found in the mitochondrion inner membrane. Functionally, component of the ubiquinol-cytochrome c reductase complex (complex III or cytochrome b-c1 complex) that is part of the mitochondrial respiratory chain. The b-c1 complex mediates electron transfer from ubiquinol to cytochrome c. Contributes to the generation of a proton gradient across the mitochondrial membrane that is then used for ATP synthesis. The chain is Cytochrome b (MT-CYB) from Tadarida brasiliensis (Brazilian free-tailed bat).